A 310-amino-acid chain; its full sequence is Ribosomal RNA small subunit methyltransferase H (310 aa).

S-adenosyl-L-methionine is bound by residues 35–37 (GGH), aspartate 52, phenylalanine 79, aspartate 100, and glutamine 107.

The protein belongs to the methyltransferase superfamily. RsmH family.

The protein resides in the cytoplasm. It carries out the reaction cytidine(1402) in 16S rRNA + S-adenosyl-L-methionine = N(4)-methylcytidine(1402) in 16S rRNA + S-adenosyl-L-homocysteine + H(+). Its function is as follows. Specifically methylates the N4 position of cytidine in position 1402 (C1402) of 16S rRNA. This chain is Ribosomal RNA small subunit methyltransferase H, found in Anaeromyxobacter sp. (strain Fw109-5).